The following is a 433-amino-acid chain: MASLGSYAKKHKVTIIGSGNWGSTIAKIVAESTREHKDVFEEDVQMWVFEEKVTIPKDSPYYESEEPQKLTEVINKHHENVKYLPGIKLPSNIIANPSLTDAVRDSSVLVFNLPHEFLGKVCQQLNGHIVPFARGISCIKGVDVSGSGINLFCEVIGEKLGIYCGALSGANVASQIAAEEGVSETTIAYDPPPIDSSRAATPRDRSPNYDSTSANKLPDLTVTSADSNGKDDRGRRTKAKLTPVPESYPPLDHGTLQILFDRPYFSVSMVSDVAGVSLSGALKNIVALAAGFVDGKGWGSNVQSAVIRVGLAEMLKFAREFFGESVDPFTILLESAGVADVITSCISGRNFRCASMAVKRGVSVAEIEEKELNGQKLQGTSTAKEVNSLLKARGREGDYPLFTTVNEILEGKARVDDLPKLVIRQKHTIEKSG.

NAD(+)-binding positions include 17–22 (GSGNWG), Phe49, and Phe117. Lys140 lines the substrate pocket. NAD(+) is bound at residue Ala173. Residues 187-246 (IAYDPPPIDSSRAATPRDRSPNYDSTSANKLPDLTVTSADSNGKDDRGRRTKAKLTPVPE) are disordered. Polar residues predominate over residues 208 to 227 (NYDSTSANKLPDLTVTSADS). The Proton acceptor role is filled by Lys283. Residues Arg349 and Gln378 each contribute to the NAD(+) site. Position 349-350 (349-350 (RN)) interacts with substrate.

It belongs to the NAD-dependent glycerol-3-phosphate dehydrogenase family.

The catalysed reaction is sn-glycerol 3-phosphate + NAD(+) = dihydroxyacetone phosphate + NADH + H(+). In Pyricularia oryzae (strain Y34) (Rice blast fungus), this protein is Glycerol-3-phosphate dehydrogenase [NAD(+)].